A 387-amino-acid polypeptide reads, in one-letter code: Protein kinase ORF16 (387 aa).

One can recognise a Protein kinase domain in the interval 82 to 381; sequence KKILSRVGPE…VTLMTELSLL (300 aa). Lys-122 serves as a coordination point for ATP. The active-site Proton acceptor is the Asp-226.

The protein belongs to the protein kinase superfamily. Ser/Thr protein kinase family.

It carries out the reaction L-seryl-[protein] + ATP = O-phospho-L-seryl-[protein] + ADP + H(+). It catalyses the reaction L-threonyl-[protein] + ATP = O-phospho-L-threonyl-[protein] + ADP + H(+). This is Protein kinase ORF16 (ORF16) from Ictalurid herpesvirus 1 (strain Auburn) (IcHV-1).